A 202-amino-acid chain; its full sequence is ATP-dependent Clp protease proteolytic subunit (202 aa).

Catalysis depends on S107, which acts as the Nucleophile. The active site involves H132.

Belongs to the peptidase S14 family. Fourteen ClpP subunits assemble into 2 heptameric rings which stack back to back to give a disk-like structure with a central cavity, resembling the structure of eukaryotic proteasomes.

It localises to the cytoplasm. It catalyses the reaction Hydrolysis of proteins to small peptides in the presence of ATP and magnesium. alpha-casein is the usual test substrate. In the absence of ATP, only oligopeptides shorter than five residues are hydrolyzed (such as succinyl-Leu-Tyr-|-NHMec, and Leu-Tyr-Leu-|-Tyr-Trp, in which cleavage of the -Tyr-|-Leu- and -Tyr-|-Trp bonds also occurs).. Cleaves peptides in various proteins in a process that requires ATP hydrolysis. Has a chymotrypsin-like activity. Plays a major role in the degradation of misfolded proteins. This Shewanella amazonensis (strain ATCC BAA-1098 / SB2B) protein is ATP-dependent Clp protease proteolytic subunit.